We begin with the raw amino-acid sequence, 359 residues long: Structure-specific endonuclease subunit SLX1 homolog (359 aa).

Positions 9–91 constitute a GIY-YIG domain; sequence GLFACYCLVA…TYPTRSRYVN (83 aa). The segment at 192–238 adopts an SLX1-type zinc-finger fold; that stretch reads CPICQDGVSPSNVQCMQCSARFCITCAGKLFTRRNTLIPCFGKCPIC. The tract at residues 256 to 359 is disordered; that stretch reads VAGRKSVPHK…LPSDVISITD (104 aa). Positions 269 to 281 are enriched in polar residues; sequence VDGQSSLSQNSSY. The span at 295-306 shows a compositional bias: basic and acidic residues; it reads EPEKDDISRDES. The segment covering 316–326 has biased composition (low complexity); the sequence is SSVALSDSSRS.

The protein belongs to the SLX1 family. As to quaternary structure, forms a heterodimer with a member of the SLX4 family. A divalent metal cation serves as cofactor.

It is found in the nucleus. Functionally, catalytic subunit of a heterodimeric structure-specific endonuclease that resolves DNA secondary structures generated during DNA repair and recombination. Has endonuclease activity towards branched DNA substrates, introducing single-strand cuts in duplex DNA close to junctions with ss-DNA. The polypeptide is Structure-specific endonuclease subunit SLX1 homolog (Giardia intestinalis (strain ATCC 50803 / WB clone C6) (Giardia lamblia)).